A 179-amino-acid chain; its full sequence is NADH dehydrogenase [ubiquinone] 1 beta subcomplex subunit 9 (179 aa).

N-acetylalanine is present on alanine 2. A Phosphoserine modification is found at serine 85. The disordered stretch occupies residues 136 to 162 (EVKQLQEETPPGGPLTEALPPARKEGD).

This sequence belongs to the complex I LYR family. In terms of assembly, mammalian complex I is composed of 45 different subunits.

It is found in the mitochondrion inner membrane. Accessory subunit of the mitochondrial membrane respiratory chain NADH dehydrogenase (Complex I), that is believed to be not involved in catalysis. Complex I functions in the transfer of electrons from NADH to the respiratory chain. The immediate electron acceptor for the enzyme is believed to be ubiquinone. This is NADH dehydrogenase [ubiquinone] 1 beta subcomplex subunit 9 (NDUFB9) from Pongo abelii (Sumatran orangutan).